Reading from the N-terminus, the 452-residue chain is Peptidase M20 domain-containing protein SMAC_03666.2 (452 aa).

The signal sequence occupies residues 1-28; the sequence is MKATSNLLLLWGTSLLSPSSAFVIDNHH. Residue Asn-140 is glycosylated (N-linked (GlcNAc...) asparagine). Asp-186 lines the Zn(2+) pocket. Catalysis depends on Glu-220, which acts as the Proton acceptor. A Zn(2+)-binding site is contributed by Glu-221. Asn-315 carries N-linked (GlcNAc...) asparagine glycosylation.

Belongs to the peptidase M20A family. Zn(2+) serves as cofactor.

It is found in the secreted. The protein is Peptidase M20 domain-containing protein SMAC_03666.2 of Sordaria macrospora (strain ATCC MYA-333 / DSM 997 / K(L3346) / K-hell).